Consider the following 803-residue polypeptide: Phenylalanine--tRNA ligase beta subunit (803 aa).

In terms of domain architecture, tRNA-binding spans 39-152; sequence TPGFQKVVAG…PDASPGADAA (114 aa). The region spanning 406 to 480 is the B5 domain; sequence RQPVTIELRP…RLYGYNRIPV (75 aa). Residues Asp-458, Asp-464, Glu-467, and Glu-468 each contribute to the Mg(2+) site. The region spanning 709–802 is the FDX-ACB domain; that stretch reads PRFPAVERDL…LEERLGASLR (94 aa).

The protein belongs to the phenylalanyl-tRNA synthetase beta subunit family. Type 1 subfamily. Tetramer of two alpha and two beta subunits. Requires Mg(2+) as cofactor.

It is found in the cytoplasm. The enzyme catalyses tRNA(Phe) + L-phenylalanine + ATP = L-phenylalanyl-tRNA(Phe) + AMP + diphosphate + H(+). This Moorella thermoacetica (strain ATCC 39073 / JCM 9320) protein is Phenylalanine--tRNA ligase beta subunit.